Consider the following 295-residue polypeptide: Protoheme IX farnesyltransferase (295 aa).

9 helical membrane passes run 7–27 (VTKPGIIFGNLISVIGGFLLA), 34–54 (VPLFILTMAGVSLVVASGCVF), 78–98 (LIAPGVSLWYASALGVAGIAL), 106–126 (LAALLAVLGFIVYVGVYSLYM), 131–151 (VYGTLVGSLSGAAPPVIGYCA), 161–181 (LILLAIFSLWQMPHSYAIAIF), 207–227 (ITLYILAFMVPTLMLFLGGYA), 228–248 (GYKYLIVATAVSVWWLGMALS), and 263–283 (LFMFSIVTITCLSVMMSVDFQ).

The protein belongs to the UbiA prenyltransferase family. Protoheme IX farnesyltransferase subfamily.

It localises to the cell inner membrane. It catalyses the reaction heme b + (2E,6E)-farnesyl diphosphate + H2O = Fe(II)-heme o + diphosphate. It functions in the pathway porphyrin-containing compound metabolism; heme O biosynthesis; heme O from protoheme: step 1/1. Its function is as follows. Converts heme B (protoheme IX) to heme O by substitution of the vinyl group on carbon 2 of heme B porphyrin ring with a hydroxyethyl farnesyl side group. In Aeromonas salmonicida (strain A449), this protein is Protoheme IX farnesyltransferase.